Reading from the N-terminus, the 545-residue chain is Periplasmic trehalase (545 aa).

The signal sequence occupies residues Met1–Thr30. Residues Arg160, Trp167 to Asp168, Asn204, Arg213 to Gln215, Arg285 to Glu287, and Gly318 contribute to the substrate site. Catalysis depends on proton donor/acceptor residues Asp320 and Glu503. Glu518 provides a ligand contact to substrate.

The protein belongs to the glycosyl hydrolase 37 family.

It localises to the periplasm. The enzyme catalyses alpha,alpha-trehalose + H2O = alpha-D-glucose + beta-D-glucose. Its function is as follows. Provides the cells with the ability to utilize trehalose at high osmolarity by splitting it into glucose molecules that can subsequently be taken up by the phosphotransferase-mediated uptake system. The sequence is that of Periplasmic trehalase from Pseudomonas aeruginosa (strain ATCC 15692 / DSM 22644 / CIP 104116 / JCM 14847 / LMG 12228 / 1C / PRS 101 / PAO1).